An 89-amino-acid polypeptide reads, in one-letter code: U-scoloptoxin(11)-Sm4a (89 aa).

The first 17 residues, 1-17 (MFFKLVLVSAVAIQALS), serve as a signal peptide directing secretion.

This sequence belongs to the scoloptoxin-11 family. In terms of processing, contains 3 disulfide bonds. As to expression, expressed by the venom gland.

It is found in the secreted. The chain is U-scoloptoxin(11)-Sm4a from Scolopendra morsitans (Tanzanian blue ringleg centipede).